Here is a 424-residue protein sequence, read N- to C-terminus: Glutamate-1-semialdehyde 2,1-aminomutase (424 aa).

N6-(pyridoxal phosphate)lysine is present on K263.

Belongs to the class-III pyridoxal-phosphate-dependent aminotransferase family. HemL subfamily. In terms of assembly, homodimer. It depends on pyridoxal 5'-phosphate as a cofactor.

It is found in the cytoplasm. It carries out the reaction (S)-4-amino-5-oxopentanoate = 5-aminolevulinate. It participates in porphyrin-containing compound metabolism; protoporphyrin-IX biosynthesis; 5-aminolevulinate from L-glutamyl-tRNA(Glu): step 2/2. The polypeptide is Glutamate-1-semialdehyde 2,1-aminomutase (Campylobacter jejuni subsp. jejuni serotype O:23/36 (strain 81-176)).